The following is an 845-amino-acid chain: Beta-glucosidase B (845 aa).

Asparagine 202 carries N-linked (GlcNAc...) asparagine glycosylation. Residue aspartate 230 is part of the active site. N-linked (GlcNAc...) asparagine glycosylation is present at asparagine 235. A PA14 domain is found at 406–557 (EGQPGWTLDF…HNRDLLSEAV (152 aa)). N-linked (GlcNAc...) asparagine glycosylation is found at asparagine 591, asparagine 612, and asparagine 794.

It belongs to the glycosyl hydrolase 3 family.

It catalyses the reaction Hydrolysis of terminal, non-reducing beta-D-glucosyl residues with release of beta-D-glucose.. The protein operates within glycan metabolism; cellulose degradation. Functionally, beta-glucosidases are one of a number of cellulolytic enzymes involved in the degradation of cellulosic biomass. Catalyzes the last step releasing glucose from the inhibitory cellobiose. This Emericella nidulans (strain FGSC A4 / ATCC 38163 / CBS 112.46 / NRRL 194 / M139) (Aspergillus nidulans) protein is Beta-glucosidase B (bglB).